The chain runs to 48 residues: DNA-directed RNA polymerase subunit Rpo12 (48 aa).

C9, C26, and C29 together coordinate Zn(2+).

Belongs to the archaeal Rpo12/eukaryotic RPC10 RNA polymerase subunit family. As to quaternary structure, part of the RNA polymerase complex. Requires Zn(2+) as cofactor.

The protein localises to the cytoplasm. The enzyme catalyses RNA(n) + a ribonucleoside 5'-triphosphate = RNA(n+1) + diphosphate. In terms of biological role, DNA-dependent RNA polymerase (RNAP) catalyzes the transcription of DNA into RNA using the four ribonucleoside triphosphates as substrates. The polypeptide is DNA-directed RNA polymerase subunit Rpo12 (Sulfurisphaera tokodaii (strain DSM 16993 / JCM 10545 / NBRC 100140 / 7) (Sulfolobus tokodaii)).